The sequence spans 327 residues: Serine/threonine-protein phosphatase PP2A catalytic subunit (327 aa).

4 residues coordinate Mn(2+): Asp-75, His-77, Asp-103, and Asn-135. Catalysis depends on His-136, which acts as the Proton donor. Residues His-185 and His-259 each coordinate Mn(2+). Residue Leu-327 is modified to Leucine methyl ester.

This sequence belongs to the PPP phosphatase family. PP-2A subfamily. Mn(2+) serves as cofactor.

It carries out the reaction O-phospho-L-seryl-[protein] + H2O = L-seryl-[protein] + phosphate. It catalyses the reaction O-phospho-L-threonyl-[protein] + H2O = L-threonyl-[protein] + phosphate. In Neurospora crassa (strain ATCC 24698 / 74-OR23-1A / CBS 708.71 / DSM 1257 / FGSC 987), this protein is Serine/threonine-protein phosphatase PP2A catalytic subunit (pph-1).